Consider the following 283-residue polypeptide: Pantoate--beta-alanine ligase (283 aa).

It belongs to the pantothenate synthetase family.

It catalyses the reaction (R)-pantoate + beta-alanine + ATP = (R)-pantothenate + AMP + diphosphate + H(+). It participates in cofactor biosynthesis; (R)-pantothenate biosynthesis; (R)-pantothenate from (R)-pantoate and beta-alanine: step 1/1. This Schizosaccharomyces pombe (strain 972 / ATCC 24843) (Fission yeast) protein is Pantoate--beta-alanine ligase (pan6).